The chain runs to 551 residues: Interleukin-2 receptor subunit beta (551 aa).

A signal peptide spans 1-26; it reads MATLALSWCLPLLILLLPLATSSASA. Residues 27–240 are Extracellular-facing; the sequence is AVNGTSRFTC…TKPAALGKDT (214 aa). N-linked (GlcNAc...) asparagine glycosylation is found at asparagine 29, asparagine 43, and asparagine 71. Cysteine 36 and cysteine 46 form a disulfide bridge. A disulfide bond links cysteine 74 and cysteine 86. One can recognise a Fibronectin type-III domain in the interval 134–234; sequence APISLQVVHV…QPLAFRTKPA (101 aa). A glycan (N-linked (GlcNAc...) asparagine) is linked at asparagine 149. The short motif at 220 to 224 is the WSXWS motif element; sequence WSPWS. Residues 241–265 form a helical membrane-spanning segment; it reads IPWLGHLLVGLSGAFGFIILVYLLI. Topologically, residues 266–551 are cytoplasmic; that stretch reads NCRNTGPWLK…LQDQDPTHLV (286 aa). The Box 1 motif signature appears at 278–286; it reads LKCHTPDPS. 3 disordered regions span residues 389–417, 430–484, and 496–517; these read EEEP…EDDA, FSPS…DLVD, and AGEQ…ARPP.

Belongs to the type I cytokine receptor family. Type 4 subfamily. In terms of assembly, non-covalent dimer of an alpha and a beta subunit. IL2R exists in 3 different forms: a high affinity dimer, an intermediate affinity monomer (beta subunit), and a low affinity monomer (alpha subunit). The high and intermediate affinity forms also associate with a gamma subunit. Interacts with SHB upon interleukin stimulation.

It localises to the cell membrane. Its subcellular location is the cell surface. In terms of biological role, receptor for interleukin-2. This beta subunit is involved in receptor mediated endocytosis and transduces the mitogenic signals of IL2. Probably in association with IL15RA, involved in the stimulation of neutrophil phagocytosis by IL15. This is Interleukin-2 receptor subunit beta (IL2RB) from Macaca fascicularis (Crab-eating macaque).